The following is a 431-amino-acid chain: Alpha-gurjunene synthase (431 aa).

2 residues coordinate Mg(2+): aspartate 126 and aspartate 130. Arginine 267 provides a ligand contact to (2E,6E)-farnesyl diphosphate. Mg(2+)-binding residues include asparagine 321 and serine 325. (2E,6E)-farnesyl diphosphate is bound at residue lysine 328. Residue glutamate 329 coordinates Mg(2+). 412–413 (RY) is a (2E,6E)-farnesyl diphosphate binding site.

It belongs to the terpene synthase family. The cofactor is Mg(2+).

It carries out the reaction (2E,6E)-farnesyl diphosphate = (-)-alpha-gurjunene + diphosphate. The catalysed reaction is (2E,6E)-farnesyl diphosphate + H2O = 5-hydroxy-alpha-gurjunene + diphosphate. Its pathway is secondary metabolite biosynthesis; terpenoid biosynthesis. Its function is as follows. Catalyzes the conversion of (2E,6E)-farnesyl diphosphate (FPP) into the sesquiterpene alcohols (-)-alpha-gurjunene and 5-hydroxy-alpha-gurjunene. Other unidentified sesquiterpene alcohols found to be catalyzed by MTPSL4 may arise from carbocation reaction intermediates along the catalytic cascade to gurjunene being quenched by a water molecule, yielding formation of the alcohols. This chain is Alpha-gurjunene synthase, found in Marchantia polymorpha (Common liverwort).